Consider the following 290-residue polypeptide: Barley B recombinant-like protein C (290 aa).

2 disordered regions span residues 60-90 and 102-183; these read PHHH…YGMM and QPEP…RKNI. The segment covering 104-116 has biased composition (pro residues); that stretch reads EPQPQLQHPPSPP. Positions 138 to 158 are enriched in basic residues; that stretch reads PPKKRQQGRQPKVLRPKKPKK.

Belongs to the BBR/BPC family.

The protein resides in the nucleus. Its function is as follows. Transcriptional regulator that specifically binds to GA-rich elements (GAGA-repeats) present in regulatory sequences of genes involved in developmental processes. The protein is Barley B recombinant-like protein C of Oryza sativa subsp. japonica (Rice).